Reading from the N-terminus, the 213-residue chain is Redox-sensing transcriptional repressor Rex (213 aa).

Positions 16 to 55 form a DNA-binding region, H-T-H motif; the sequence is VYSRFLERMDRNGIVTVSSGEIAEGVGVSSAQVRKDLAYF. Residue 90 to 95 participates in NAD(+) binding; sequence GAGNLG.

It belongs to the transcriptional regulatory Rex family. Homodimer.

The protein resides in the cytoplasm. Modulates transcription in response to changes in cellular NADH/NAD(+) redox state. This Pelotomaculum thermopropionicum (strain DSM 13744 / JCM 10971 / SI) protein is Redox-sensing transcriptional repressor Rex.